A 505-amino-acid chain; its full sequence is Maturase K (505 aa).

The protein belongs to the intron maturase 2 family. MatK subfamily.

It localises to the plastid. It is found in the chloroplast. Functionally, usually encoded in the trnK tRNA gene intron. Probably assists in splicing its own and other chloroplast group II introns. This Chiococca alba (West Indian milkberry) protein is Maturase K.